Here is a 268-residue protein sequence, read N- to C-terminus: Peptide transport system ATP-binding protein SapF (268 aa).

In terms of domain architecture, ABC transporter spans 6 to 251 (LEVRNLSKTF…PLHELTKRLI (246 aa)). 47-54 (GENGSGKS) provides a ligand contact to ATP.

Belongs to the ABC transporter superfamily.

Its subcellular location is the cell inner membrane. Its function is as follows. Involved in a peptide intake transport system that plays a role in the resistance to antimicrobial peptides. The chain is Peptide transport system ATP-binding protein SapF (sapF) from Escherichia coli O6:H1 (strain CFT073 / ATCC 700928 / UPEC).